A 163-amino-acid polypeptide reads, in one-letter code: Nucleotide-binding protein syc0675_c (163 aa).

This sequence belongs to the YajQ family.

Functionally, nucleotide-binding protein. This Synechococcus sp. (strain ATCC 27144 / PCC 6301 / SAUG 1402/1) (Anacystis nidulans) protein is Nucleotide-binding protein syc0675_c.